The primary structure comprises 117 residues: Large ribosomal subunit protein eL22 (117 aa).

Ser-49 and Ser-50 each carry phosphoserine.

The protein belongs to the eukaryotic ribosomal protein eL22 family. As to quaternary structure, component of the large ribosomal subunit (LSU). Mature yeast ribosomes consist of a small (40S) and a large (60S) subunit. The 40S small subunit contains 1 molecule of ribosomal RNA (18S rRNA) and at least 33 different proteins. The large 60S subunit contains 3 rRNA molecules (25S, 5.8S and 5S rRNA) and at least 46 different proteins.

It localises to the cytoplasm. It is found in the nucleus. Its subcellular location is the nucleolus. Functionally, component of the ribosome, a large ribonucleoprotein complex responsible for the synthesis of proteins in the cell. The small ribosomal subunit (SSU) binds messenger RNAs (mRNAs) and translates the encoded message by selecting cognate aminoacyl-transfer RNA (tRNA) molecules. The large subunit (LSU) contains the ribosomal catalytic site termed the peptidyl transferase center (PTC), which catalyzes the formation of peptide bonds, thereby polymerizing the amino acids delivered by tRNAs into a polypeptide chain. The nascent polypeptides leave the ribosome through a tunnel in the LSU and interact with protein factors that function in enzymatic processing, targeting, and the membrane insertion of nascent chains at the exit of the ribosomal tunnel. The chain is Large ribosomal subunit protein eL22 (rpl22) from Schizosaccharomyces pombe (strain 972 / ATCC 24843) (Fission yeast).